We begin with the raw amino-acid sequence, 198 residues long: uncharacterized protein (198 aa).

This is an uncharacterized protein from Homo sapiens (Human).